Consider the following 122-residue polypeptide: NADH-quinone oxidoreductase subunit A (122 aa).

The next 3 membrane-spanning stretches (helical) occupy residues methionine 10–glycine 30, isoleucine 66–valine 86, and leucine 91–alanine 111.

The protein belongs to the complex I subunit 3 family. In terms of assembly, NDH-1 is composed of 14 different subunits. Subunits NuoA, H, J, K, L, M, N constitute the membrane sector of the complex.

It localises to the cell membrane. It carries out the reaction a quinone + NADH + 5 H(+)(in) = a quinol + NAD(+) + 4 H(+)(out). Functionally, NDH-1 shuttles electrons from NADH, via FMN and iron-sulfur (Fe-S) centers, to quinones in the respiratory chain. The immediate electron acceptor for the enzyme in this species is believed to be a menaquinone. Couples the redox reaction to proton translocation (for every two electrons transferred, four hydrogen ions are translocated across the cytoplasmic membrane), and thus conserves the redox energy in a proton gradient. The protein is NADH-quinone oxidoreductase subunit A of Bacillus cereus (strain ATCC 14579 / DSM 31 / CCUG 7414 / JCM 2152 / NBRC 15305 / NCIMB 9373 / NCTC 2599 / NRRL B-3711).